A 366-amino-acid polypeptide reads, in one-letter code: D-alanine--D-alanine ligase (366 aa).

The region spanning 144–347 (KRLLKDAGLK…YRELIENLIE (204 aa)) is the ATP-grasp domain. ATP is bound at residue 174 to 229 (KEELGLPMFIKPANQGSSVGVHKVENEEQFYSAIKDAFQFDHKLLVEEAIVGREIE). 3 residues coordinate Mg(2+): D301, E314, and N316.

It belongs to the D-alanine--D-alanine ligase family. It depends on Mg(2+) as a cofactor. Mn(2+) serves as cofactor.

The protein localises to the cytoplasm. It carries out the reaction 2 D-alanine + ATP = D-alanyl-D-alanine + ADP + phosphate + H(+). It functions in the pathway cell wall biogenesis; peptidoglycan biosynthesis. Its function is as follows. Cell wall formation. The protein is D-alanine--D-alanine ligase of Oceanobacillus iheyensis (strain DSM 14371 / CIP 107618 / JCM 11309 / KCTC 3954 / HTE831).